The sequence spans 359 residues: 4-hydroxy-3-methylbut-2-en-1-yl diphosphate synthase (flavodoxin) (359 aa).

Residues C264, C267, C299, and E306 each coordinate [4Fe-4S] cluster.

This sequence belongs to the IspG family. [4Fe-4S] cluster serves as cofactor.

It carries out the reaction (2E)-4-hydroxy-3-methylbut-2-enyl diphosphate + oxidized [flavodoxin] + H2O + 2 H(+) = 2-C-methyl-D-erythritol 2,4-cyclic diphosphate + reduced [flavodoxin]. It participates in isoprenoid biosynthesis; isopentenyl diphosphate biosynthesis via DXP pathway; isopentenyl diphosphate from 1-deoxy-D-xylulose 5-phosphate: step 5/6. Its function is as follows. Converts 2C-methyl-D-erythritol 2,4-cyclodiphosphate (ME-2,4cPP) into 1-hydroxy-2-methyl-2-(E)-butenyl 4-diphosphate. The protein is 4-hydroxy-3-methylbut-2-en-1-yl diphosphate synthase (flavodoxin) of Mycoplasmoides gallisepticum (strain R(low / passage 15 / clone 2)) (Mycoplasma gallisepticum).